Here is a 370-residue protein sequence, read N- to C-terminus: Chloromuconate cycloisomerase (370 aa).

K165 (proton acceptor) is an active-site residue. Residues D194, E220, and D245 each coordinate Mn(2+). The active-site Proton donor is E323.

This sequence belongs to the mandelate racemase/muconate lactonizing enzyme family. Mn(2+) serves as cofactor.

The catalysed reaction is 2-[(2R)-2-chloro-2,5-dihydro-5-oxofuryl]acetate = 3-chloro-cis,cis-muconate + H(+). Its pathway is aromatic compound metabolism; 3-chlorocatechol degradation. This chain is Chloromuconate cycloisomerase (tcbD), found in Pseudomonas sp. (strain P51).